Consider the following 176-residue polypeptide: Putative REP-associated tyrosine transposase (176 aa).

The Mg(2+) site is built by His59 and His61. Tyr148 serves as the catalytic Nucleophile.

The protein belongs to the transposase 17 family. RAYT subfamily. As to quaternary structure, homodimer. Mg(2+) is required as a cofactor.

Transposase responsible for transposition an insertion sequence (IS) element. Transposition occurs in 2 main steps, excision from the donor DNA 'top strand' into a single strand circle and its subsequent reinsertion into the DNA target. This increases the copy number of the IS. This Haemophilus influenzae (strain ATCC 51907 / DSM 11121 / KW20 / Rd) protein is Putative REP-associated tyrosine transposase.